Here is a 189-residue protein sequence, read N- to C-terminus: Peptidyl-tRNA hydrolase (189 aa).

Y15 contributes to the tRNA binding site. Residue H20 is the Proton acceptor of the active site. TRNA is bound by residues Y64, N66, and N112.

It belongs to the PTH family. As to quaternary structure, monomer.

The protein localises to the cytoplasm. The enzyme catalyses an N-acyl-L-alpha-aminoacyl-tRNA + H2O = an N-acyl-L-amino acid + a tRNA + H(+). Functionally, hydrolyzes ribosome-free peptidyl-tRNAs (with 1 or more amino acids incorporated), which drop off the ribosome during protein synthesis, or as a result of ribosome stalling. Its function is as follows. Catalyzes the release of premature peptidyl moieties from peptidyl-tRNA molecules trapped in stalled 50S ribosomal subunits, and thus maintains levels of free tRNAs and 50S ribosomes. This Sulfurihydrogenibium sp. (strain YO3AOP1) protein is Peptidyl-tRNA hydrolase.